Here is a 224-residue protein sequence, read N- to C-terminus: MKPKYALRKDMIGEFTLNKSFNTYRGKVLKADFNGPIEGIVMKNKKEHIYFYPLLALHMVKPLNCVPINVIPKTSLPTNPKNVHIKEALSRIVGRTLKVYYETPKTSYLGRLLGFTRGVFSWTLVLEIHGEVVLLFNPDYIVYYGTKWKFLKNNPPYKPPRLMNITKTANYLKRCLLEDVIIEPEYPRINIEDKVFVYPYGVVSKDDYLGKTVEDILKEKEFLI.

This is an uncharacterized protein from Methanocaldococcus jannaschii (strain ATCC 43067 / DSM 2661 / JAL-1 / JCM 10045 / NBRC 100440) (Methanococcus jannaschii).